Reading from the N-terminus, the 62-residue chain is Large ribosomal subunit protein uL29 (62 aa).

The protein belongs to the universal ribosomal protein uL29 family.

The chain is Large ribosomal subunit protein uL29 from Vesicomyosocius okutanii subsp. Calyptogena okutanii (strain HA).